A 720-amino-acid chain; its full sequence is Phosphoribosylformylglycinamidine synthase subunit PurL (720 aa).

Histidine 34 is a catalytic residue. Residue tyrosine 37 participates in ATP binding. Mg(2+) is bound at residue glutamate 83. Residues 84–87 (SHNH) and arginine 106 each bind substrate. Histidine 85 serves as the catalytic Proton acceptor. Residue aspartate 107 participates in Mg(2+) binding. Glutamine 231 lines the substrate pocket. Mg(2+) is bound at residue aspartate 259. A substrate-binding site is contributed by 303–305 (ESQ). The ATP site is built by aspartate 480 and glycine 517. Asparagine 518 provides a ligand contact to Mg(2+). Serine 520 provides a ligand contact to substrate.

It belongs to the FGAMS family. Monomer. Part of the FGAM synthase complex composed of 1 PurL, 1 PurQ and 2 PurS subunits.

It localises to the cytoplasm. It carries out the reaction N(2)-formyl-N(1)-(5-phospho-beta-D-ribosyl)glycinamide + L-glutamine + ATP + H2O = 2-formamido-N(1)-(5-O-phospho-beta-D-ribosyl)acetamidine + L-glutamate + ADP + phosphate + H(+). It participates in purine metabolism; IMP biosynthesis via de novo pathway; 5-amino-1-(5-phospho-D-ribosyl)imidazole from N(2)-formyl-N(1)-(5-phospho-D-ribosyl)glycinamide: step 1/2. Its function is as follows. Part of the phosphoribosylformylglycinamidine synthase complex involved in the purines biosynthetic pathway. Catalyzes the ATP-dependent conversion of formylglycinamide ribonucleotide (FGAR) and glutamine to yield formylglycinamidine ribonucleotide (FGAM) and glutamate. The FGAM synthase complex is composed of three subunits. PurQ produces an ammonia molecule by converting glutamine to glutamate. PurL transfers the ammonia molecule to FGAR to form FGAM in an ATP-dependent manner. PurS interacts with PurQ and PurL and is thought to assist in the transfer of the ammonia molecule from PurQ to PurL. This Haloarcula marismortui (strain ATCC 43049 / DSM 3752 / JCM 8966 / VKM B-1809) (Halobacterium marismortui) protein is Phosphoribosylformylglycinamidine synthase subunit PurL.